Reading from the N-terminus, the 78-residue chain is Protein SlyX homolog (78 aa).

This sequence belongs to the SlyX family.

This is Protein SlyX homolog from Xanthomonas euvesicatoria pv. vesicatoria (strain 85-10) (Xanthomonas campestris pv. vesicatoria).